The following is a 285-amino-acid chain: Pantothenate synthetase (285 aa).

30 to 37 (MGYLHAGH) provides a ligand contact to ATP. The active-site Proton donor is the His37. Gln61 serves as a coordination point for (R)-pantoate. Residue Gln61 participates in beta-alanine binding. Residue 147 to 150 (GQKD) coordinates ATP. Position 153 (Gln153) interacts with (R)-pantoate. ATP-binding positions include Val176 and 184–187 (LSSR).

The protein belongs to the pantothenate synthetase family. Homodimer.

The protein resides in the cytoplasm. It catalyses the reaction (R)-pantoate + beta-alanine + ATP = (R)-pantothenate + AMP + diphosphate + H(+). It functions in the pathway cofactor biosynthesis; (R)-pantothenate biosynthesis; (R)-pantothenate from (R)-pantoate and beta-alanine: step 1/1. Its function is as follows. Catalyzes the condensation of pantoate with beta-alanine in an ATP-dependent reaction via a pantoyl-adenylate intermediate. This Solidesulfovibrio magneticus (strain ATCC 700980 / DSM 13731 / RS-1) (Desulfovibrio magneticus) protein is Pantothenate synthetase.